The primary structure comprises 141 residues: Large ribosomal subunit protein uL11 (141 aa).

This sequence belongs to the universal ribosomal protein uL11 family. Part of the ribosomal stalk of the 50S ribosomal subunit. Interacts with L10 and the large rRNA to form the base of the stalk. L10 forms an elongated spine to which L12 dimers bind in a sequential fashion forming a multimeric L10(L12)X complex. In terms of processing, one or more lysine residues are methylated.

Its function is as follows. Forms part of the ribosomal stalk which helps the ribosome interact with GTP-bound translation factors. This is Large ribosomal subunit protein uL11 from Chlamydia pneumoniae (Chlamydophila pneumoniae).